The chain runs to 154 residues: Myoglobin (154 aa).

Residues 2–148 (GLSDGEWQLV…FRNDMAAKYK (147 aa)) form the Globin domain. A Phosphoserine modification is found at serine 4. Histidine 65 lines the nitrite pocket. O2 is bound at residue histidine 65. A Phosphothreonine modification is found at threonine 68. Histidine 94 is a heme b binding site.

It belongs to the globin family. As to quaternary structure, monomeric.

It is found in the cytoplasm. Its subcellular location is the sarcoplasm. The enzyme catalyses Fe(III)-heme b-[protein] + nitric oxide + H2O = Fe(II)-heme b-[protein] + nitrite + 2 H(+). The catalysed reaction is H2O2 + AH2 = A + 2 H2O. Monomeric heme protein which primary function is to store oxygen and facilitate its diffusion within muscle tissues. Reversibly binds oxygen through a pentacoordinated heme iron and enables its timely and efficient release as needed during periods of heightened demand. Depending on the oxidative conditions of tissues and cells, and in addition to its ability to bind oxygen, it also has a nitrite reductase activity whereby it regulates the production of bioactive nitric oxide. Under stress conditions, like hypoxia and anoxia, it also protects cells against reactive oxygen species thanks to its pseudoperoxidase activity. The protein is Myoglobin (MB) of Aotus trivirgatus (Three-striped night monkey).